The chain runs to 160 residues: Putative 4-hydroxy-4-methyl-2-oxoglutarate aldolase (160 aa).

Substrate-binding positions include 75 to 78 (GDQL) and R97. Residue D98 participates in a divalent metal cation binding.

It belongs to the class II aldolase/RraA-like family. In terms of assembly, homotrimer. A divalent metal cation serves as cofactor.

The catalysed reaction is 4-hydroxy-4-methyl-2-oxoglutarate = 2 pyruvate. The enzyme catalyses oxaloacetate + H(+) = pyruvate + CO2. Functionally, catalyzes the aldol cleavage of 4-hydroxy-4-methyl-2-oxoglutarate (HMG) into 2 molecules of pyruvate. Also contains a secondary oxaloacetate (OAA) decarboxylase activity due to the common pyruvate enolate transition state formed following C-C bond cleavage in the retro-aldol and decarboxylation reactions. This chain is Putative 4-hydroxy-4-methyl-2-oxoglutarate aldolase, found in Vibrio parahaemolyticus serotype O3:K6 (strain RIMD 2210633).